Reading from the N-terminus, the 248-residue chain is tRNA uridine(34) hydroxylase (248 aa).

The Rhodanese domain occupies 124–218; it reads TKQDVIVVDT…YLEDTQNKNN (95 aa). Catalysis depends on Cys178, which acts as the Cysteine persulfide intermediate.

The protein belongs to the TrhO family.

The enzyme catalyses uridine(34) in tRNA + AH2 + O2 = 5-hydroxyuridine(34) in tRNA + A + H2O. In terms of biological role, catalyzes oxygen-dependent 5-hydroxyuridine (ho5U) modification at position 34 in tRNAs. The polypeptide is tRNA uridine(34) hydroxylase (Rickettsia bellii (strain OSU 85-389)).